Consider the following 359-residue polypeptide: Chorismate synthase (359 aa).

Residue R47 participates in NADP(+) binding. Residues 123–125 (RSS), G283, 298–302 (KPTSS), and R326 each bind FMN.

It belongs to the chorismate synthase family. Homotetramer. Requires FMNH2 as cofactor.

It catalyses the reaction 5-O-(1-carboxyvinyl)-3-phosphoshikimate = chorismate + phosphate. The protein operates within metabolic intermediate biosynthesis; chorismate biosynthesis; chorismate from D-erythrose 4-phosphate and phosphoenolpyruvate: step 7/7. Functionally, catalyzes the anti-1,4-elimination of the C-3 phosphate and the C-6 proR hydrogen from 5-enolpyruvylshikimate-3-phosphate (EPSP) to yield chorismate, which is the branch point compound that serves as the starting substrate for the three terminal pathways of aromatic amino acid biosynthesis. This reaction introduces a second double bond into the aromatic ring system. The chain is Chorismate synthase from Chlamydia abortus (strain DSM 27085 / S26/3) (Chlamydophila abortus).